Here is a 320-residue protein sequence, read N- to C-terminus: Cytochrome f (320 aa).

An N-terminal signal peptide occupies residues 1–35 (MQNRNTFSWVKEQMTRFISVSIMIYVITRTSISNA). Heme is bound by residues tyrosine 36, cysteine 56, cysteine 59, and histidine 60. A helical transmembrane segment spans residues 286 to 306 (VQGLLFFLASVILAQIFLVLK).

This sequence belongs to the cytochrome f family. In terms of assembly, the 4 large subunits of the cytochrome b6-f complex are cytochrome b6, subunit IV (17 kDa polypeptide, petD), cytochrome f and the Rieske protein, while the 4 small subunits are PetG, PetL, PetM and PetN. The complex functions as a dimer. Heme serves as cofactor.

It is found in the plastid. The protein resides in the chloroplast thylakoid membrane. In terms of biological role, component of the cytochrome b6-f complex, which mediates electron transfer between photosystem II (PSII) and photosystem I (PSI), cyclic electron flow around PSI, and state transitions. The sequence is that of Cytochrome f from Liriodendron tulipifera (Tuliptree).